Reading from the N-terminus, the 363-residue chain is Uroporphyrinogen decarboxylase (363 aa).

Substrate is bound by residues 27–31 (RQAGR), D77, Y157, T212, and H333.

Belongs to the uroporphyrinogen decarboxylase family. Homodimer.

The protein resides in the cytoplasm. The enzyme catalyses uroporphyrinogen III + 4 H(+) = coproporphyrinogen III + 4 CO2. It participates in porphyrin-containing compound metabolism; protoporphyrin-IX biosynthesis; coproporphyrinogen-III from 5-aminolevulinate: step 4/4. Catalyzes the decarboxylation of four acetate groups of uroporphyrinogen-III to yield coproporphyrinogen-III. In Cupriavidus necator (strain ATCC 17699 / DSM 428 / KCTC 22496 / NCIMB 10442 / H16 / Stanier 337) (Ralstonia eutropha), this protein is Uroporphyrinogen decarboxylase.